Reading from the N-terminus, the 452-residue chain is Zinc finger protein 277 (452 aa).

The C2H2-type 1 zinc finger occupies 200–224; it reads LMCLYCEKIFRDRPTLKEHMRKKGH. The disordered stretch occupies residues 248-271; it reads APTPRKQHLQKRRRETASVSTVAD. Over residues 252 to 261 the composition is skewed to basic residues; that stretch reads RKQHLQKRRR. A C2H2-type 2 zinc finger spans residues 361 to 385; it reads LRCVTCDLQFDEEELLVEHMAQESH.

It belongs to the ZNF277 family. In terms of assembly, interacts with components of the origin recognition complex (ORC) complex, Orc2 and Orc3, components of the SAGA transcription coactivator-HAT complex, Gcn5 and e(y)2, components of the mRNP biogenesis THO complex, thoc5 and e(y)2, and a component of the TFIID complex, TBP. Also interacts with polybromo, a component of the chromatin remodeling SWI/SNF complex.

It localises to the nucleus. The protein resides in the cytoplasm. Functionally, DNA binding protein which is involved in the positive regulation of both basal and inducible transcription. Mainly localizes to active promoter sites and interacts with components of various transcription and replication regulatory complexes, such as the ORC, SAGA, THO, TFIID and SWI/SNF complexes. It may therefore regulate transcription by promoting the association of these complexes to their binding sites. In Drosophila melanogaster (Fruit fly), this protein is Zinc finger protein 277.